The following is a 322-amino-acid chain: Exosome complex component RRP4 homolog (322 aa).

The S1 motif domain maps to 94-172 (GDIVVGRVIE…HDGSLQLQAR (79 aa)). The KH domain occupies 182 to 237 (GQLLKVDPYLVKRSKHHFHYVESLGIDLIIGCNGFIWVGEHVEVRDPMAIDDQKDE).

It belongs to the RRP4 family. Component of the RNA exosome complex. Interacts with RPP41. As to expression, expressed in roots, stems, rosette and cauline leaves, flowers and siliques.

The protein localises to the cytoplasm. It is found in the nucleus. The protein resides in the nucleolus. In terms of biological role, non-catalytic component of the RNA exosome complex which has 3'-&gt;5' exoribonuclease activity and participates in a multitude of cellular RNA processing, maturation and degradation events. In vitro, is an active and distributive 3'-&gt;5' exonuclease requiring a free 3'-OH on the substrate and releasing nucleoside 5'-monophosphates. Required for normal embryo development. The sequence is that of Exosome complex component RRP4 homolog from Arabidopsis thaliana (Mouse-ear cress).